Here is a 506-residue protein sequence, read N- to C-terminus: Maturase K (506 aa).

It belongs to the intron maturase 2 family. MatK subfamily.

The protein resides in the plastid. It is found in the chloroplast. Functionally, usually encoded in the trnK tRNA gene intron. Probably assists in splicing its own and other chloroplast group II introns. This Phyllodoce empetriformis (Pink mountainheath) protein is Maturase K.